The sequence spans 65 residues: Large ribosomal subunit protein bL35 (65 aa).

The segment at 1 to 21 (MPKMKTKSGAAKRFTVRAGGT) is disordered.

The protein belongs to the bacterial ribosomal protein bL35 family.

The polypeptide is Large ribosomal subunit protein bL35 (Nitrosospira multiformis (strain ATCC 25196 / NCIMB 11849 / C 71)).